The following is a 461-amino-acid chain: Protein DVR-1 homolog (461 aa).

Positions 1-30 (MEYSRKTYLDLNIMAKYILILSLFFGPGLS) are cleaved as a signal peptide. Residues 31-338 (WDVFYSGDED…QKKGGKRPRK (308 aa)) constitute a propeptide that is removed on maturation. Residue N149 is glycosylated (N-linked (GlcNAc...) asparagine). Residues 317–351 (SHLRRNRRAATRQKKGGKRPRKPDTDNDIASRDSA) are disordered. Positions 318–337 (HLRRNRRAATRQKKGGKRPR) are enriched in basic residues. Basic and acidic residues predominate over residues 338 to 347 (KPDTDNDIAS). Cystine bridges form between C360–C426, C389–C458, and C393–C460. N-linked (GlcNAc...) asparagine glycosylation occurs at N402.

It belongs to the TGF-beta family. In terms of assembly, homodimer; disulfide-linked.

The protein localises to the secreted. The chain is Protein DVR-1 homolog (DVR1) from Strongylocentrotus purpuratus (Purple sea urchin).